We begin with the raw amino-acid sequence, 235 residues long: Demethylmenaquinone methyltransferase (235 aa).

Residues threonine 58, aspartate 79, and 106–107 each bind S-adenosyl-L-methionine; that span reads NA.

The protein belongs to the class I-like SAM-binding methyltransferase superfamily. MenG/UbiE family.

It catalyses the reaction a 2-demethylmenaquinol + S-adenosyl-L-methionine = a menaquinol + S-adenosyl-L-homocysteine + H(+). Its pathway is quinol/quinone metabolism; menaquinone biosynthesis; menaquinol from 1,4-dihydroxy-2-naphthoate: step 2/2. In terms of biological role, methyltransferase required for the conversion of demethylmenaquinol (DMKH2) to menaquinol (MKH2). The sequence is that of Demethylmenaquinone methyltransferase from Shouchella clausii (strain KSM-K16) (Alkalihalobacillus clausii).